The primary structure comprises 602 residues: Alpha-glucosides permease MPH3 (602 aa).

Topologically, residues 1-106 (MKNLSFLINR…AAAWSLLVST (106 aa)) are cytoplasmic. Residues 107 to 127 (TLIMEGYDTAILGAFYALPIF) form a helical membrane-spanning segment. Over 128 to 142 (QRKFGSQNDKTGEWE) the chain is Extracellular. The helical transmembrane segment at 143-163 (ISASWQIGLTLCYMAGEIVGL) threads the bilayer. Residues 164–178 (QLTGPSVDLVGNRYT) are Cytoplasmic-facing. Residues 179-199 (LIIALFFLAAFTFILYFCNSL) traverse the membrane as a helical segment. Position 200 (Gly-200) is a topological domain, extracellular. A helical membrane pass occupies residues 201 to 221 (MIAVGQALCGMPWGCFQCLTV). Topologically, residues 222–234 (SYASEICPLALRY) are cytoplasmic. The helical transmembrane segment at 235–255 (YLTTYSNLCWLFGQLFAAGIM) threads the bilayer. Residues 256-270 (KNSQKKYADSELGYK) are Extracellular-facing. A helical membrane pass occupies residues 271 to 291 (LPFALQWILPVPLALGIFFAP). The Cytoplasmic segment spans residues 292–363 (ESPWWLVKKG…EDKINRRRTR (72 aa)). A helical transmembrane segment spans residues 364-384 (ITCLCWAGQATCGSILIGYST). At 385-397 (YFYEKAGVSTEMS) the chain is on the extracellular side. Residues 398-418 (FTFSIIQYCLGICATFLSWWA) form a helical membrane-spanning segment. Topologically, residues 419 to 426 (SKYFGRYD) are cytoplasmic. Residues 427–447 (LYAFGLAFQTIVFFIIGGLGC) form a helical membrane-spanning segment. The Extracellular portion of the chain corresponds to 448-459 (SSTHGSKMGSGS). The helical transmembrane segment at 460-480 (LLMAVAFFYNLGIAPVVFCLV) threads the bilayer. Over 481–492 (SEMPSSRLRTKT) the chain is Cytoplasmic. The helical transmembrane segment at 493 to 513 (IILARNTYNVVSIICSVLILY) threads the bilayer. Residues 514–525 (QLNSKKWNWGAK) lie on the Extracellular side of the membrane. The helical transmembrane segment at 526–546 (SGFFWGVLCFCTLIWAVVDLP) threads the bilayer. Over 547–602 (ETAGKTFVEINELFKLGVSARKFKSTKVDPFVVKNTPKYVSHNDPKGDIEASIAEE) the chain is Cytoplasmic.

Belongs to the major facilitator superfamily. Sugar transporter (TC 2.A.1.1) family.

Its subcellular location is the cell membrane. Its function is as follows. High-affinity uptake of maltose and maltotriose. Also transports alpha-methylglucoside, glucose and turanose but not melezitose or trehalose. The sequence is that of Alpha-glucosides permease MPH3 (MPH3) from Saccharomyces cerevisiae (strain YJM789) (Baker's yeast).